The following is a 304-amino-acid chain: Non-specific ribonucleoside hydrolase RihC (304 aa).

H233 is an active-site residue.

It belongs to the IUNH family. RihC subfamily.

Functionally, hydrolyzes both purine and pyrimidine ribonucleosides with a broad-substrate specificity. This chain is Non-specific ribonucleoside hydrolase RihC, found in Escherichia coli O127:H6 (strain E2348/69 / EPEC).